A 249-amino-acid chain; its full sequence is MSSGQQVWHTAVPPPRRSSSIASMPRSPSSAGSPRSPGTPGSERVASPLECSICFSGYDNIFKTPKELSCTHVFCLECLARLAAAQPVGRPGGEAVPCPFCRQPTAVPPAGAPALCTSRQLQARMPAHLRREEPVWLEGTKLCCQPLPTTPGREPGFVCVDVGLSKPAEPPAPARDPAPRRGRLARCWARCRDWRRMALVSALLLMLFCVALWPVQCALKTGNLRCLPLPPRPPATSTAASPLGPLTDN.

Residues 1-44 are disordered; sequence MSSGQQVWHTAVPPPRRSSSIASMPRSPSSAGSPRSPGTPGSER. The segment covering 17–44 has biased composition (low complexity); sequence RSSSIASMPRSPSSAGSPRSPGTPGSER. The RING-type zinc finger occupies 51 to 102; that stretch reads CSICFSGYDNIFKTPKELSCTHVFCLECLARLAAAQPVGRPGGEAVPCPFCR. A helical transmembrane segment spans residues 199–219; sequence LVSALLLMLFCVALWPVQCAL. The disordered stretch occupies residues 230-249; sequence PPRPPATSTAASPLGPLTDN. Residues 235 to 249 show a composition bias toward low complexity; it reads ATSTAASPLGPLTDN.

Its subcellular location is the membrane. The sequence is that of RING finger protein 223 (RNF223) from Homo sapiens (Human).